Consider the following 249-residue polypeptide: DNA repair protein RecO (249 aa).

The protein belongs to the RecO family.

In terms of biological role, involved in DNA repair and RecF pathway recombination. In Exiguobacterium sibiricum (strain DSM 17290 / CCUG 55495 / CIP 109462 / JCM 13490 / 255-15), this protein is DNA repair protein RecO.